A 221-amino-acid chain; its full sequence is MRYLNLKDTVLLGRNFNEYVRMFNLNEDLLSNKILDVASGVSSFCAEGNKKGYNITSSDKIYNLKPEEIEEKCKKDLDFMEKHLRGMFKNNFNWNEFKTVDEWKKTRERTYKTFIEDYKTNRKRYIYTTYPKTNFKDDEFAISLVGHFLLLYDNILNYQFHKETIDELLRISEEIRIFPILNLRGEKSIFLDKILKEYKARIEKTDYEFMKGGNKVLIIRR.

This is an uncharacterized protein from Methanocaldococcus jannaschii (strain ATCC 43067 / DSM 2661 / JAL-1 / JCM 10045 / NBRC 100440) (Methanococcus jannaschii).